A 364-amino-acid chain; its full sequence is Histidinol-phosphate aminotransferase (364 aa).

At Lys226 the chain carries N6-(pyridoxal phosphate)lysine.

It belongs to the class-II pyridoxal-phosphate-dependent aminotransferase family. Histidinol-phosphate aminotransferase subfamily. Homodimer. The cofactor is pyridoxal 5'-phosphate.

It catalyses the reaction L-histidinol phosphate + 2-oxoglutarate = 3-(imidazol-4-yl)-2-oxopropyl phosphate + L-glutamate. Its pathway is amino-acid biosynthesis; L-histidine biosynthesis; L-histidine from 5-phospho-alpha-D-ribose 1-diphosphate: step 7/9. In Sulfurimonas denitrificans (strain ATCC 33889 / DSM 1251) (Thiomicrospira denitrificans (strain ATCC 33889 / DSM 1251)), this protein is Histidinol-phosphate aminotransferase.